We begin with the raw amino-acid sequence, 347 residues long: GMP reductase (347 aa).

NADP(+) is bound at residue Ala108 to Ala131. Positions 181 and 183 each coordinate K(+). Cys186 serves as the catalytic Thioimidate intermediate. Ile216–Val239 contacts NADP(+).

Belongs to the IMPDH/GMPR family. GuaC type 1 subfamily. In terms of assembly, homotetramer.

It carries out the reaction IMP + NH4(+) + NADP(+) = GMP + NADPH + 2 H(+). Its function is as follows. Catalyzes the irreversible NADPH-dependent deamination of GMP to IMP. It functions in the conversion of nucleobase, nucleoside and nucleotide derivatives of G to A nucleotides, and in maintaining the intracellular balance of A and G nucleotides. The polypeptide is GMP reductase (Salmonella paratyphi C (strain RKS4594)).